Reading from the N-terminus, the 585-residue chain is Sodium/calcium exchanger NCL (585 aa).

5 consecutive transmembrane segments (helical) span residues 83–103, 106–126, 149–169, 212–232, and 239–259; these read VFLILVYGFLMFTAATYLSAG, LLLEILGPGIVGGLFLPMLGA, VSVGMGLLAGSTVMLLTVIWG, IMAISVIPFVIVQLPQMLGST, and VLIALILSVLMLISYCVYQVF. 2 consecutive EF-hand domains span residues 299–334 and 339–374; these read PDEHVIRKLFLTIDANNDGHLSAAELKALIIGISFE and DKDDAVGKVLQDFDKTLDEQVDQEEFVRGIKQWLIQ. Ca(2+) is bound by residues aspartate 312, asparagine 314, aspartate 316, histidine 318, glutamate 323, aspartate 352, aspartate 356, glutamine 358, and glutamate 363. Transmembrane regions (helical) follow at residues 427 to 447 and 457 to 477; these read WITIKAALLLLLGAAIAAAFA and FSAATGIPSFFISFIALPLAT. A glycan (N-linked (GlcNAc...) asparagine) is linked at asparagine 478. The next 3 membrane-spanning stretches (helical) occupy residues 505–525, 532–552, and 558–578; these read CGGVTMNNILCLSVFLAIVYV, FSSEVLVILIVCLVMGGFASF, and LWTCFIAYLLYPFSLGLVYIL.

The protein belongs to the Ca(2+):cation antiporter (CaCA) (TC 2.A.19) family. As to expression, expressed in roots, leaves, stems, petals, stamens, ovules and siliques.

The protein resides in the cell membrane. The protein localises to the vacuole membrane. In terms of biological role, possesses sodium/calcium exchanger (NCX) activity when expressed in a heterologous mammalian CHO-K1 cell system. Does not possess cation/proton exchanger (CAX) or sodium/proton (NHX) activity when expressed in a heterologous yeast cell system. Has the ability to bind calcium in vitro. Participates in the maintenance of calcium homeostasis. May play a role in auxin response, diurnal rhythm and flowering time. Involved in salt stress response. In Arabidopsis thaliana (Mouse-ear cress), this protein is Sodium/calcium exchanger NCL.